The following is a 760-amino-acid chain: Probable ubiquitin carboxyl-terminal hydrolase creB (760 aa).

A disordered region spans residues 1-28 (MGSFLRSFRNNAGSTTPSVGAVPAKKEV). Over residues 8-18 (FRNNAGSTTPS) the composition is skewed to polar residues. Residues 55 to 469 (YGMENYGNTC…CAYVLFYQET (415 aa)) enclose the USP domain. Catalysis depends on cysteine 64, which acts as the Nucleophile. Disordered regions lie at residues 114 to 146 (AEAQ…DSPD) and 242 to 270 (PAAI…KTPN). The segment covering 258–270 (VDQSASSGSKTPN) has biased composition (polar residues). Histidine 420 acts as the Proton acceptor in catalysis. A disordered region spans residues 520–760 (EEHNRPNGLK…LRKKSFSILS (241 aa)). A coiled-coil region spans residues 575–635 (KSDVQGKKER…AALEASKASK (61 aa)). Basic and acidic residues-rich tracts occupy residues 578–626 (VQGK…ELKA), 635–651 (KAQE…KDKL), and 708–742 (DPKD…ERTG). A compositionally biased stretch (basic residues) spans 743 to 760 (HGKWRSFSLRKKSFSILS).

This sequence belongs to the peptidase C19 family. Interacts with creA, creC and qutD.

It catalyses the reaction Thiol-dependent hydrolysis of ester, thioester, amide, peptide and isopeptide bonds formed by the C-terminal Gly of ubiquitin (a 76-residue protein attached to proteins as an intracellular targeting signal).. Functionally, ubiquitin thioesterase component of the regulatory network controlling carbon source utilization through ubiquitination and deubiquitination involving creA, creB, creC, creD and acrB. Deubiquitinates the creA catabolic repressor and the quinate permease qutD. Also plays a role in response to carbon starvation and the control of extracellular proteases activity. This Aspergillus clavatus (strain ATCC 1007 / CBS 513.65 / DSM 816 / NCTC 3887 / NRRL 1 / QM 1276 / 107) protein is Probable ubiquitin carboxyl-terminal hydrolase creB (creB).